The chain runs to 240 residues: Transmembrane emp24 domain-containing protein 6 (240 aa).

The signal sequence occupies residues 1 to 21; the sequence is MSPLLFGAGLVVLNLVTSARS. Topologically, residues 22-200 are lumenal; the sequence is QKTEPLSGSG…FFLIQSNYNY (179 aa). Positions 53 to 138 constitute a GOLD domain; sequence TECFWQFAHQ…SVQVYLNFGV (86 aa). Residues asparagine 107 and asparagine 156 are each glycosylated (N-linked (GlcNAc...) asparagine). Residues 201–223 form a helical membrane-spanning segment; that stretch reads VNWWSTAQSLVIILSGILQLYFL. The Cytoplasmic segment spans residues 224–240; the sequence is KRLFNVPTTTDTKKPRC.

The protein belongs to the EMP24/GP25L family.

Its subcellular location is the endoplasmic reticulum membrane. This chain is Transmembrane emp24 domain-containing protein 6 (TMED6), found in Homo sapiens (Human).